Consider the following 279-residue polypeptide: Fatty acid metabolism regulator protein (279 aa).

Residues 6–74 (KSPAGFAEKY…HGKPTKVNQF (69 aa)) enclose the HTH gntR-type domain. The segment at residues 34–53 (ERELSELIGVTRTTLREVLQ) is a DNA-binding region (H-T-H motif).

Homodimer.

The protein resides in the cytoplasm. Functionally, multifunctional regulator of fatty acid metabolism. The protein is Fatty acid metabolism regulator protein of Vibrio parahaemolyticus serotype O3:K6 (strain RIMD 2210633).